Consider the following 155-residue polypeptide: Ribonuclease H (155 aa).

In terms of domain architecture, RNase H type-1 spans 4-145 (DISKVVIYTD…ADKLAVQGRQ (142 aa)). D13, E51, D73, and D137 together coordinate Mg(2+).

This sequence belongs to the RNase H family. Monomer. Requires Mg(2+) as cofactor.

It is found in the cytoplasm. The enzyme catalyses Endonucleolytic cleavage to 5'-phosphomonoester.. Its function is as follows. Endonuclease that specifically degrades the RNA of RNA-DNA hybrids. This chain is Ribonuclease H, found in Rickettsia bellii (strain RML369-C).